Reading from the N-terminus, the 312-residue chain is DNA-directed RNA polymerase subunit alpha (312 aa).

An alpha N-terminal domain (alpha-NTD) region spans residues 1-229 (MLQYQIDRIE…ELFQPLATVT (229 aa)). Residues 246–312 (IPLEELNLSV…ISIPQSRTSA (67 aa)) are alpha C-terminal domain (alpha-CTD).

It belongs to the RNA polymerase alpha chain family. In terms of assembly, in cyanobacteria the RNAP catalytic core is composed of 2 alpha, 1 beta, 1 beta', 1 gamma and 1 omega subunit. When a sigma factor is associated with the core the holoenzyme is formed, which can initiate transcription.

The enzyme catalyses RNA(n) + a ribonucleoside 5'-triphosphate = RNA(n+1) + diphosphate. In terms of biological role, DNA-dependent RNA polymerase catalyzes the transcription of DNA into RNA using the four ribonucleoside triphosphates as substrates. This chain is DNA-directed RNA polymerase subunit alpha, found in Parasynechococcus marenigrum (strain WH8102).